We begin with the raw amino-acid sequence, 165 residues long: Chorismate pyruvate-lyase (165 aa).

The substrate site is built by methionine 35, arginine 77, leucine 115, and glutamate 156.

The protein belongs to the UbiC family. In terms of assembly, monomer.

Its subcellular location is the cytoplasm. It catalyses the reaction chorismate = 4-hydroxybenzoate + pyruvate. It functions in the pathway cofactor biosynthesis; ubiquinone biosynthesis. In terms of biological role, removes the pyruvyl group from chorismate, with concomitant aromatization of the ring, to provide 4-hydroxybenzoate (4HB) for the ubiquinone pathway. The polypeptide is Chorismate pyruvate-lyase (Salmonella arizonae (strain ATCC BAA-731 / CDC346-86 / RSK2980)).